The chain runs to 145 residues: Large ribosomal subunit protein bL19 (145 aa).

Belongs to the bacterial ribosomal protein bL19 family.

Functionally, this protein is located at the 30S-50S ribosomal subunit interface and may play a role in the structure and function of the aminoacyl-tRNA binding site. This chain is Large ribosomal subunit protein bL19, found in Brachyspira hyodysenteriae (strain ATCC 49526 / WA1).